The chain runs to 209 residues: ATP-dependent Clp protease proteolytic subunit (209 aa).

S111 serves as the catalytic Nucleophile. Residue H136 is part of the active site.

This sequence belongs to the peptidase S14 family. As to quaternary structure, fourteen ClpP subunits assemble into 2 heptameric rings which stack back to back to give a disk-like structure with a central cavity, resembling the structure of eukaryotic proteasomes.

Its subcellular location is the cytoplasm. The catalysed reaction is Hydrolysis of proteins to small peptides in the presence of ATP and magnesium. alpha-casein is the usual test substrate. In the absence of ATP, only oligopeptides shorter than five residues are hydrolyzed (such as succinyl-Leu-Tyr-|-NHMec, and Leu-Tyr-Leu-|-Tyr-Trp, in which cleavage of the -Tyr-|-Leu- and -Tyr-|-Trp bonds also occurs).. In terms of biological role, cleaves peptides in various proteins in a process that requires ATP hydrolysis. Has a chymotrypsin-like activity. Plays a major role in the degradation of misfolded proteins. The protein is ATP-dependent Clp protease proteolytic subunit of Dechloromonas aromatica (strain RCB).